We begin with the raw amino-acid sequence, 947 residues long: DNA mismatch repair protein MutS 2 (947 aa).

Positions 623 to 643 (IPNDTHLGSGPVPASRDGSDD) are disordered. Residue 659–666 (GPNMSGKS) participates in ATP binding. The interval 841–916 (AETADTGVEA…GAAAEDELPE (76 aa)) is disordered.

This sequence belongs to the DNA mismatch repair MutS family.

In terms of biological role, this protein is involved in the repair of mismatches in DNA. It is possible that it carries out the mismatch recognition step. This protein has a weak ATPase activity. The sequence is that of DNA mismatch repair protein MutS 2 from Haloarcula marismortui (strain ATCC 43049 / DSM 3752 / JCM 8966 / VKM B-1809) (Halobacterium marismortui).